A 392-amino-acid chain; its full sequence is 23S rRNA (uracil(747)-C(5))-methyltransferase RlmC (392 aa).

4 residues coordinate [4Fe-4S] cluster: Cys4, Cys12, Cys15, and Cys93. S-adenosyl-L-methionine-binding residues include Gln218, Phe247, Glu275, and Asn321. The active-site Nucleophile is the Cys348.

It belongs to the class I-like SAM-binding methyltransferase superfamily. RNA M5U methyltransferase family. RlmC subfamily.

The catalysed reaction is uridine(747) in 23S rRNA + S-adenosyl-L-methionine = 5-methyluridine(747) in 23S rRNA + S-adenosyl-L-homocysteine + H(+). In terms of biological role, catalyzes the formation of 5-methyl-uridine at position 747 (m5U747) in 23S rRNA. The chain is 23S rRNA (uracil(747)-C(5))-methyltransferase RlmC from Haemophilus influenzae (strain 86-028NP).